Consider the following 754-residue polypeptide: Circadian input-output histidine kinase CikA (754 aa).

Residues 1–183 form an N-terminal domain, not required to complement the deletion strain region; sequence MLAPSSNCSL…QVSAQIRLSL (183 aa). The tract at residues 184 to 338 is GAF domain, required to complement the deletion strain; sequence DLSEILTTTI…RDILQHLAEH (155 aa). The region spanning 390 to 611 is the Histidine kinase domain; it reads TMSHELRTPL…TFTVWIPEQT (222 aa). His393 bears the Phosphohistidine; by autocatalysis mark. The segment at 606–754 is psR domain, required to complement the deletion strain and for cell pole localization, attenuates autophosphorylation activity. Binds KaiB(fs); the sequence is WIPEQTLIEP…NLSEGDRPSS (149 aa). The Response regulatory domain occupies 629–742; it reads HILLLEEEDE…LLLTTLQGLC (114 aa).

It in the N-terminal section; belongs to the phytochrome family. In terms of assembly, homodimer. Part of the circadian clock (KaiA, KaiB, KaiC, CikA, RpaA, SasA), the composition of which varies during the circadian cycle. Interacts with LdpA. KaiA and CikA compete for binding to KaiB(fs).

The protein localises to the cytoplasm. The protein resides in the membrane. It carries out the reaction ATP + protein L-histidine = ADP + protein N-phospho-L-histidine.. Its function is as follows. Functions in an input pathway to the Kai circadian clock. Senses oxidized quinones via its C-terminal pseudo-receiver domain, providing a link between cell metabolism and the clock. Affects the ratio of phosphorylated to unphosphorylated KaiC, binds quinones via its pseudo-receptor domain. Quinone-binding destabilizes the protein rapidly. Autophosphorylates, does not transfer the phosphate to its pseudo-receiver (PsR) domain. May play a role in cell division, as suggested by its polar location and increased cell length in a deletion strain. In terms of biological role, member of the two-component regulatory system CikA/RpaA output pathway from the circadian clock, negatively regulating kaiBC expression independently of labA and of sasA. One of three clock output pathways. Dephosphorylates phospho-RpaA, enhanced by KaiB and KaiC, has only modest kinase activity on RpaA. A very robust clock is reconstituted with KaiA, KaiB, KaiC, SasA, CikA and RpaA; output is measured by transcription from an appropriate reporter. The protein is Circadian input-output histidine kinase CikA of Synechococcus elongatus (strain ATCC 33912 / PCC 7942 / FACHB-805) (Anacystis nidulans R2).